Consider the following 361-residue polypeptide: Ribosomal RNA large subunit methyltransferase M (361 aa).

S-adenosyl-L-methionine is bound by residues Ser190, 223–226 (CPGG), Asp242, Asp262, and Asp280. Catalysis depends on Lys309, which acts as the Proton acceptor.

Belongs to the class I-like SAM-binding methyltransferase superfamily. RNA methyltransferase RlmE family. RlmM subfamily. Monomer.

It localises to the cytoplasm. The catalysed reaction is cytidine(2498) in 23S rRNA + S-adenosyl-L-methionine = 2'-O-methylcytidine(2498) in 23S rRNA + S-adenosyl-L-homocysteine + H(+). Its function is as follows. Catalyzes the 2'-O-methylation at nucleotide C2498 in 23S rRNA. The chain is Ribosomal RNA large subunit methyltransferase M from Actinobacillus pleuropneumoniae serotype 7 (strain AP76).